Reading from the N-terminus, the 259-residue chain is Keratin-associated protein 10-8 (259 aa).

The interval 26–243 is 19 X 5 AA repeats of C-C-X(3); it reads HVSRVSSPST…SCQPSCCHPA (218 aa). 19 repeat units span residues 50–54, 60–64, 65–69, 98–102, 108–112, 118–122, 123–127, 133–137, 145–149, 155–159, 165–169, 170–174, 175–179, 187–191, 197–201, 202–206, 221–225, 228–232, and 239–243.

It belongs to the KRTAP type 10 family. Interacts with hair keratins. Restricted to a narrow region of the hair fiber cuticle, lying approximately 20 cell layers above the apex of the dermal papilla of the hair root; not detected in any other tissues.

In the hair cortex, hair keratin intermediate filaments are embedded in an interfilamentous matrix, consisting of hair keratin-associated proteins (KRTAP), which are essential for the formation of a rigid and resistant hair shaft through their extensive disulfide bond cross-linking with abundant cysteine residues of hair keratins. The matrix proteins include the high-sulfur and high-glycine-tyrosine keratins. The chain is Keratin-associated protein 10-8 (KRTAP10-8) from Homo sapiens (Human).